We begin with the raw amino-acid sequence, 222 residues long: Probable nicotinate-nucleotide adenylyltransferase (222 aa).

This sequence belongs to the NadD family.

It catalyses the reaction nicotinate beta-D-ribonucleotide + ATP + H(+) = deamido-NAD(+) + diphosphate. It participates in cofactor biosynthesis; NAD(+) biosynthesis; deamido-NAD(+) from nicotinate D-ribonucleotide: step 1/1. Catalyzes the reversible adenylation of nicotinate mononucleotide (NaMN) to nicotinic acid adenine dinucleotide (NaAD). This chain is Probable nicotinate-nucleotide adenylyltransferase, found in Xylella fastidiosa (strain M12).